Consider the following 236-residue polypeptide: uncharacterized protein (236 aa).

The chain crosses the membrane as a helical span at residues 15–34 (GGMAHIISEAVIAGSIGLYF). Residues 36-71 (KKISALEQTVQELQSQLEVQNNQLQWLIQQQTRRLA) are a coiled coil. Disordered regions lie at residues 83-113 (SPLPPQRDYRQQSTTTNAAGNNGAYPSFQFK) and 185-236 (ATTQ…IDCE). Composition is skewed to polar residues over residues 93-102 (QQSTTTNAAG) and 185-195 (ATTQVSTFSKP). Positions 225–236 (ALDKILNDIDCE) are enriched in basic and acidic residues.

The protein localises to the membrane. This is an uncharacterized protein from Aedes vexans (Inland floodwater mosquito).